A 326-amino-acid chain; its full sequence is MAFTPFPPRQPTASARLPLTLMTLDDWALATITGADSEKYMQGQVTADVSQMTEDQHLLAAHCDAKGKMWSNLRLFRDGDGFAWIERRSVRESQLTELKKYAVFSKVTIAPDDERVLLGVAGFQARAALANIFSELPSKEKQVVKEGATTLLWFEHPAERFLIVTDEATANMLTDKLRGEAELNNSQQWLALNIEAGFPVIDAANSGQFIPQATNLQALGGISFKKGCYTGQEMVARAKFRGANKRALWLLAGSASRLPEAGEDLELKMGENWRRTGTVLAAVKLEDGQVVVQVVMNNDMEPDSIFRVRDDANTLRIEPLPYSLEE.

Folate contacts are provided by tryptophan 27 and tryptophan 189.

This sequence belongs to the tRNA-modifying YgfZ family.

The protein localises to the cytoplasm. Functionally, folate-binding protein involved in regulating the level of ATP-DnaA and in the modification of some tRNAs. It is probably a key factor in regulatory networks that act via tRNA modification, such as initiation of chromosomal replication. The protein is tRNA-modifying protein YgfZ of Escherichia coli O7:K1 (strain IAI39 / ExPEC).